A 112-amino-acid polypeptide reads, in one-letter code: Large ribosomal subunit protein eL30 (112 aa).

The protein belongs to the eukaryotic ribosomal protein eL30 family.

This Dictyostelium discoideum (Social amoeba) protein is Large ribosomal subunit protein eL30 (rpl30).